The sequence spans 594 residues: Solute carrier family 13 member 1 (594 aa).

The next 5 helical transmembrane spans lie at 13–33 (FLLVVFTILVFLPLPLIIRTK), 40–60 (ILFVIAIFWITEALPLSITAL), 77–97 (VASAYFKDFHLLLIGVICLAT), 113–133 (VMMVGVNPAWLTLGFMSSTAF), and 134–154 (LSMWLSNTSTAAMVMPIVEAV). A glycan (N-linked (GlcNAc...) asparagine) is linked at Asn-174. The segment covering 192–220 (TNEKKEKTKPAPGSSHDKGKVSRKMETEK) has biased composition (basic and acidic residues). A disordered region spans residues 192 to 226 (TNEKKEKTKPAPGSSHDKGKVSRKMETEKNAVTGA). The next 8 helical transmembrane spans lie at 239–259 (LMCLSVAYSSTIGGLTTITGT), 283–303 (SWFLFSFPVALILLLLSWIWL), 347–367 (IVTLVIFIVMALLWFSRDPGF), 380–400 (GYVTDSTVALVAGILFFLIPA), 461–481 (LSPLGSLPVWLIILISSLIVT), 487–507 (ASNPATITILFPILSPLAEAI), 511–531 (PLQILLPSTLCTSFAFLLPVA), and 552–572 (AGLGVNILGVAVVMLGMFTWI). A glycan (N-linked (GlcNAc...) asparagine) is linked at Asn-590.

It belongs to the SLC13A/DASS transporter (TC 2.A.47) family. NADC subfamily. Highly expressed in kidney and ileum, detected at lower levels in duodenum/jejunum and colon, and at very low levels in cecum, testis, adrenal and adipose tissues. In terms of tissue distribution, expressed in the kidney.

It localises to the apical cell membrane. It catalyses the reaction sulfate(out) + 3 Na(+)(out) = sulfate(in) + 3 Na(+)(in). The catalysed reaction is selenate(out) + 3 Na(+)(out) = selenate(in) + 3 Na(+)(in). The enzyme catalyses thiosulfate(out) + 3 Na(+)(out) = thiosulfate(in) + 3 Na(+)(in). Functionally, sodium:sulfate symporter that mediates sulfate reabsorption in the kidney and small intestine. Can also mediate the transport of selenate and thiosulfate. The chain is Solute carrier family 13 member 1 (Slc13a1) from Mus musculus (Mouse).